The primary structure comprises 889 residues: Translation initiation factor IF-2 (889 aa).

The segment at 1–299 is disordered; sequence MTDNKDDKTL…EKFKRSQMQE (299 aa). Positions 61-76 are enriched in low complexity; sequence ITPVAATPAARPAEQR. Positions 77 to 93 are enriched in pro residues; sequence PMPPQPSGRPAPQPQPH. Residues 116–182 are compositionally biased toward basic and acidic residues; sequence MEARRRALAE…EAEKTEEKVE (67 aa). Positions 196 to 215 are enriched in low complexity; the sequence is RPQPGRAAPAATPAAPDGAA. Basic and acidic residues predominate over residues 220 to 231; that stretch reads RGTESEEDERRR. The region spanning 387–554 is the tr-type G domain; it reads SRPPIVTIMG…AILLQSEILD (168 aa). Residues 396–403 are G1; sequence GHVDHGKT. 396 to 403 lines the GTP pocket; that stretch reads GHVDHGKT. Residues 421–425 are G2; the sequence is GITQH. Residues 442–445 are G3; sequence DTPG. Residues 442 to 446 and 496 to 499 contribute to the GTP site; these read DTPGH and NKID. Residues 496-499 form a G4 region; it reads NKID. Residues 532 to 534 are G5; the sequence is SAK.

The protein belongs to the TRAFAC class translation factor GTPase superfamily. Classic translation factor GTPase family. IF-2 subfamily.

The protein resides in the cytoplasm. One of the essential components for the initiation of protein synthesis. Protects formylmethionyl-tRNA from spontaneous hydrolysis and promotes its binding to the 30S ribosomal subunits. Also involved in the hydrolysis of GTP during the formation of the 70S ribosomal complex. In Rhizobium meliloti (strain 1021) (Ensifer meliloti), this protein is Translation initiation factor IF-2.